The primary structure comprises 131 residues: Neurophysin 2 (131 aa).

Cystine bridges form between Cys-10–Cys-55, Cys-13–Cys-27, Cys-21–Cys-45, Cys-28–Cys-35, Cys-62–Cys-74, Cys-68–Cys-86, and Cys-75–Cys-80.

The protein belongs to the vasopressin/oxytocin family.

Its subcellular location is the secreted. In terms of biological role, neurophysin 2 specifically binds vasopressin. This chain is Neurophysin 2, found in Anser anser anser (Western greylag goose).